Here is a 195-residue protein sequence, read N- to C-terminus: MVKQAMKEEEKKRNTAMQSKYKGVRKRKWGKWVSEIRLPHSRERIWLGSYDTPEKAARAFDAAQFCLRGGDANFNFPNNPPSISVEKSLTPPEIQEAAARFANTFQDIVKGEEESGLVPGSEIRPESPSTSASVATSTVDYDFSFLDLLPMNFGFDSFSDDFSGFSGGDRFTEILPIEDYGGESLLDESLILWDF.

The span at 1 to 13 shows a compositional bias: basic and acidic residues; sequence MVKQAMKEEEKKR. Residues 1-22 are disordered; sequence MVKQAMKEEEKKRNTAMQSKYK. A DNA-binding region (AP2/ERF) is located at residues 20 to 77; that stretch reads KYKGVRKRKWGKWVSEIRLPHSRERIWLGSYDTPEKAARAFDAAQFCLRGGDANFNFP.

Belongs to the AP2/ERF transcription factor family. ERF subfamily.

Its subcellular location is the nucleus. Functionally, probably acts as a transcriptional activator. Binds to the GCC-box pathogenesis-related promoter element. May be involved in the regulation of gene expression by stress factors and by components of stress signal transduction pathways. The chain is Ethylene-responsive transcription factor ERF018 (ERF018) from Arabidopsis thaliana (Mouse-ear cress).